Consider the following 314-residue polypeptide: Oxaloacetate tautomerase FAHD2B, mitochondrial (314 aa).

A mitochondrion-targeting transit peptide spans methionine 1 to leucine 84. Residues glutamate 159, glutamate 161, and aspartate 190 each coordinate Mg(2+).

This sequence belongs to the FAH family. It depends on Mg(2+) as a cofactor. The cofactor is Mn(2+).

The protein localises to the mitochondrion. It catalyses the reaction oxaloacetate = enol-oxaloacetate. In terms of biological role, tautomerase that converts enol-oxaloacetate, a strong inhibitor of succinate dehydrogenase, to the physiological keto form of oxaloacetate. It is thereby required to maximize aerobic respiration efficiency by preventing succinate dehydrogenase inhibition. This Homo sapiens (Human) protein is Oxaloacetate tautomerase FAHD2B, mitochondrial.